The sequence spans 85 residues: Conotoxin Vx15a (85 aa).

A signal peptide spans 1–23; the sequence is MEKLTVLILVATVLLTIQVLAQS. Residues 24-49 constitute a propeptide that is removed on maturation; that stretch reads DGDKHLMKRSKQYATKRLSALMRGHR. Glutamine 50 is modified (pyrrolidone carboxylic acid).

The protein belongs to the conotoxin O2 superfamily. In terms of processing, contains 4 disulfide bonds. Expressed by the venom duct.

The protein localises to the secreted. The sequence is that of Conotoxin Vx15a from Conus vexillum (Flag cone).